We begin with the raw amino-acid sequence, 418 residues long: D-amino acid dehydrogenase (418 aa).

3–17 (VLVLGAGVAGVSSAW) contacts FAD.

Belongs to the DadA oxidoreductase family. It depends on FAD as a cofactor.

The enzyme catalyses a D-alpha-amino acid + A + H2O = a 2-oxocarboxylate + AH2 + NH4(+). The protein operates within amino-acid degradation; D-alanine degradation; NH(3) and pyruvate from D-alanine: step 1/1. In terms of biological role, oxidative deamination of D-amino acids. The protein is D-amino acid dehydrogenase of Neisseria meningitidis serogroup C / serotype 2a (strain ATCC 700532 / DSM 15464 / FAM18).